The primary structure comprises 224 residues: Glutamate/aspartate import permease protein GltK (224 aa).

Topologically, residues 1–19 (MYEFDWSSIVPSLPYLLDG) are periplasmic. A helical transmembrane segment spans residues 20-40 (LVITLKITVTAVVIGILWGTM). The 197-residue stretch at 20-216 (LVITLKITVT…VISLSASLLV (197 aa)) folds into the ABC transmembrane type-1 domain. Topologically, residues 41–67 (LAVMRLSSFAPVAWFAKAYVNVFRSIP) are cytoplasmic. Residues 68–88 (LVMVLLWFYLIVPGFLQNVLG) form a helical membrane-spanning segment. At 89-94 (LSPKND) the chain is on the periplasmic side. Residues 95–112 (IRLISAMVAFSMFEAAYY) form a helical membrane-spanning segment. Over 113-154 (SEIIRAGIQSISRGQSSAALALGMTHWQSMKLIILPQAFRAM) the chain is Cytoplasmic. Residues 155–175 (VPLLLTQGIVLFQDTSLVYVL) form a helical membrane-spanning segment. The Periplasmic segment spans residues 176–196 (SLADFFRTASTIGERDGTQVE). Residues 197 to 217 (MILFAGFVYFVISLSASLLVS) traverse the membrane as a helical segment. At 218–224 (YLKRRTA) the chain is on the cytoplasmic side.

The protein belongs to the binding-protein-dependent transport system permease family. HisMQ subfamily. In terms of assembly, the complex is composed of two ATP-binding proteins (GltL), two transmembrane proteins (GltJ and GltK) and a solute-binding protein (GltI).

The protein resides in the cell inner membrane. Functionally, part of the ABC transporter complex GltIJKL involved in glutamate and aspartate uptake. Probably responsible for the translocation of the substrate across the membrane. The protein is Glutamate/aspartate import permease protein GltK (gltK) of Escherichia coli O157:H7.